Reading from the N-terminus, the 541-residue chain is MDKENKMDILNNQIFLLLLITLIGMTIGKINIKNFSLDSSAIIFVGLFFGHFGYTLPKTFQTLGLVLFIYSIGLQAGPGFFFSLRQRGLKLSLGTVAIIGIGFLTTLATTYLFHFSAGTSAGIFTGALTSTPGLAVAVEIAGGQNAPAAYGVTYFFGIVGVIVFIQIIPKILNITVKDEEQALNKERDKTHKPLHFMHLELTNLNLVDRQVKHLNLKSISPVIITRLLRKNGTEPILVGGQTILQAGDHLRITGTKDDLEMMQMYLGTPVDQDIEFERVLSGEYITVSNKDICGMSLKQLNCHEVFNVQLSRISRNGIELPAGPNLRLHMGDTIHAVGSKQSLENIKKIFGNSIKDSYNFNILPIFTGLFLGFILGKIPLYIPFSGIFYLGTTGGVLIAGLFLSNIYKTGPLIWAIPSNANSFIREMGLVLFMATIGTQTGTSILATLRHEGLQLSLAGILVTTVPLISSVFICKHLLKLPFLSMLGVITGAMTSTPGLATMAKISKTPYATSSYATVYPVALISMIIYTKLLIFIVERFF.

Transmembrane regions (helical) follow at residues 10-32 (LNNQIFLLLLITLIGMTIGKINI), 39-57 (SSAIIFVGLFFGHFGYTLP), 62-84 (TLGLVLFIYSIGLQAGPGFFFSL), 91-113 (LSLGTVAIIGIGFLTTLATTYLF), and 146-168 (APAAYGVTYFFGIVGVIVFIQII). RCK C-terminal domains follow at residues 183-260 (LNKE…DDLE) and 268-352 (TPVD…IFGN). A run of 6 helical transmembrane segments spans residues 357–375 (SYNFNILPIFTGLFLGFIL), 385–407 (SGIFYLGTTGGVLIAGLFLSNIY), 428–447 (GLVLFMATIGTQTGTSILAT), 452–474 (GLQLSLAGILVTTVPLISSVFIC), 481–500 (PFLSMLGVITGAMTSTPGLA), and 515–537 (YATVYPVALISMIIYTKLLIFIV).

The protein belongs to the AAE transporter (TC 2.A.81) family.

It is found in the cell membrane. This is an uncharacterized protein from Desulfotalea psychrophila (strain LSv54 / DSM 12343).